Reading from the N-terminus, the 430-residue chain is Enolase (430 aa).

A (2R)-2-phosphoglycerate-binding site is contributed by Gln163. Glu205 functions as the Proton donor in the catalytic mechanism. Residues Asp242, Glu287, and Asp314 each coordinate Mg(2+). The (2R)-2-phosphoglycerate site is built by Lys339, Arg368, Ser369, and Lys390. Residue Lys339 is the Proton acceptor of the active site.

Belongs to the enolase family. Mg(2+) is required as a cofactor.

Its subcellular location is the cytoplasm. It localises to the secreted. The protein localises to the cell surface. The catalysed reaction is (2R)-2-phosphoglycerate = phosphoenolpyruvate + H2O. It participates in carbohydrate degradation; glycolysis; pyruvate from D-glyceraldehyde 3-phosphate: step 4/5. Its function is as follows. Catalyzes the reversible conversion of 2-phosphoglycerate (2-PG) into phosphoenolpyruvate (PEP). It is essential for the degradation of carbohydrates via glycolysis. This Bacillus pumilus (strain SAFR-032) protein is Enolase.